The chain runs to 355 residues: Uroporphyrinogen decarboxylase (355 aa).

Substrate contacts are provided by residues 38 to 42 (RQAGR), D87, Y162, S217, and H331.

It belongs to the uroporphyrinogen decarboxylase family. As to quaternary structure, homodimer.

The protein localises to the cytoplasm. The enzyme catalyses uroporphyrinogen III + 4 H(+) = coproporphyrinogen III + 4 CO2. It functions in the pathway porphyrin-containing compound metabolism; protoporphyrin-IX biosynthesis; coproporphyrinogen-III from 5-aminolevulinate: step 4/4. In terms of biological role, catalyzes the decarboxylation of four acetate groups of uroporphyrinogen-III to yield coproporphyrinogen-III. The polypeptide is Uroporphyrinogen decarboxylase (Streptomyces avermitilis (strain ATCC 31267 / DSM 46492 / JCM 5070 / NBRC 14893 / NCIMB 12804 / NRRL 8165 / MA-4680)).